We begin with the raw amino-acid sequence, 371 residues long: DNA replication and repair protein RecF (371 aa).

An ATP-binding site is contributed by 30 to 37 (GENAQGKT).

The protein belongs to the RecF family.

It is found in the cytoplasm. In terms of biological role, the RecF protein is involved in DNA metabolism; it is required for DNA replication and normal SOS inducibility. RecF binds preferentially to single-stranded, linear DNA. It also seems to bind ATP. The sequence is that of DNA replication and repair protein RecF from Staphylococcus epidermidis (strain ATCC 35984 / DSM 28319 / BCRC 17069 / CCUG 31568 / BM 3577 / RP62A).